The primary structure comprises 189 residues: uncharacterized protein (189 aa).

4 helical membrane-spanning segments follow: residues 20-40 (FILG…YLTF), 46-66 (TIII…IILI), 100-120 (VLLF…SLNI), and 126-146 (FVLY…GDVI).

It to M.jannaschii MJ0795.1 and MJ1249.1.

The protein localises to the cell membrane. This is an uncharacterized protein from Methanocaldococcus jannaschii (strain ATCC 43067 / DSM 2661 / JAL-1 / JCM 10045 / NBRC 100440) (Methanococcus jannaschii).